We begin with the raw amino-acid sequence, 467 residues long: GTPase Obg (467 aa).

The 158-residue stretch at 1–158 (MFYDEAKIFV…RWLRLELKLL (158 aa)) folds into the Obg domain. The 175-residue stretch at 159–333 (ADVGLVGLPN…LIRATWERLQ (175 aa)) folds into the OBG-type G domain. Residues 165-172 (GLPNAGKS), 190-194 (FTTLE), 214-217 (DLPG), 285-288 (NKMD), and 314-316 (SAA) contribute to the GTP site. Serine 172 and threonine 192 together coordinate Mg(2+). The region spanning 352–430 (TLDRSQERWE…VAGRELVWEP (79 aa)) is the OCT domain.

It belongs to the TRAFAC class OBG-HflX-like GTPase superfamily. OBG GTPase family. As to quaternary structure, monomer. The cofactor is Mg(2+).

The protein localises to the cytoplasm. Its function is as follows. An essential GTPase which binds GTP, GDP and possibly (p)ppGpp with moderate affinity, with high nucleotide exchange rates and a fairly low GTP hydrolysis rate. Plays a role in control of the cell cycle, stress response, ribosome biogenesis and in those bacteria that undergo differentiation, in morphogenesis control. The chain is GTPase Obg from Thermomicrobium roseum (strain ATCC 27502 / DSM 5159 / P-2).